A 110-amino-acid polypeptide reads, in one-letter code: Antimicrobial peptide microplusin (110 aa).

Residues 1 to 20 (MKAIFVSALLVVALVASTSA) form the signal peptide. Intrachain disulfides connect Cys-26/Cys-72, Cys-39/Cys-100, and Cys-61/Cys-66.

Expressed in the hemocytes, fat body and ovaries.

The protein localises to the secreted. Functionally, has bacteriostatic activity against the Gram-positive bacterium M.luteus, but not against Gram-negative bacterium E.coli SBS363. Has fungistatic activity against C.neoformans, but not C.albicans. Binds and sequesters copper and iron ions. Copper-chelating is crucial for antimicrobial activity against M.luteus. The chain is Antimicrobial peptide microplusin from Rhipicephalus microplus (Cattle tick).